Reading from the N-terminus, the 229-residue chain is NAD(P)H-quinone oxidoreductase subunit K, chloroplastic (229 aa).

[4Fe-4S] cluster is bound by residues Cys43, Cys44, Cys108, and Cys139.

The protein belongs to the complex I 20 kDa subunit family. NDH is composed of at least 16 different subunits, 5 of which are encoded in the nucleus. [4Fe-4S] cluster serves as cofactor.

The protein localises to the plastid. It localises to the chloroplast thylakoid membrane. The catalysed reaction is a plastoquinone + NADH + (n+1) H(+)(in) = a plastoquinol + NAD(+) + n H(+)(out). The enzyme catalyses a plastoquinone + NADPH + (n+1) H(+)(in) = a plastoquinol + NADP(+) + n H(+)(out). NDH shuttles electrons from NAD(P)H:plastoquinone, via FMN and iron-sulfur (Fe-S) centers, to quinones in the photosynthetic chain and possibly in a chloroplast respiratory chain. The immediate electron acceptor for the enzyme in this species is believed to be plastoquinone. Couples the redox reaction to proton translocation, and thus conserves the redox energy in a proton gradient. The polypeptide is NAD(P)H-quinone oxidoreductase subunit K, chloroplastic (Aethionema grandiflorum (Persian stone-cress)).